Here is a 185-residue protein sequence, read N- to C-terminus: TRAF-interacting protein with FHA domain-containing protein A (185 aa).

Phosphothreonine is present on Thr-9. One can recognise an FHA domain in the interval 48-104 (VKFGRNSNMCQYTFQDKQVSRVQFALQPFKQFNSSVLSFEIKNMSKKTSLMVDNQEL).

Belongs to the TIFA family. In terms of assembly, homooligomer; homooligomerizes following phosphorylation at Thr-9. Interacts with IRAK1, TRAF2 and TRAF6. Interacts with TIFAB; binding to TIFAB inhibits TRAF6 activation, possibly by inducing a conformational change in TIFA. Interacts with ZCCHC11; binding to ZCCHC11 suppresses the TRAF6-dependent activation of NF-kappa-B. Phosphorylated at Thr-9 following detection of ADP-D-glycero-beta-D-manno-heptose (ADP-Heptose) by ALPK1. Phosphorylation at Thr-9 by ALPK1 leads to the formation of an intermolecular binding between the FHA domain and phosphorylated Thr-9, promoting TIFA oligomerization and TIFA-mediated NF-kappa-B activation.

It localises to the cytoplasm. Functionally, adapter molecule that plays a key role in the activation of pro-inflammatory NF-kappa-B signaling following detection of bacterial pathogen-associated molecular pattern metabolites (PAMPs). Promotes activation of an innate immune response by inducing the oligomerization and polyubiquitination of TRAF6, which leads to the activation of TAK1 and IKK through a proteasome-independent mechanism. TIFA-dependent innate immune response is triggered by ADP-D-glycero-beta-D-manno-heptose (ADP-Heptose), a potent PAMP present in all Gram-negative and some Gram-positive bacteria: ADP-Heptose is recognized by ALPK1, which phosphorylates TIFA at Thr-9, leading to TIFA homooligomerization and subsequent activation of pro-inflammatory NF-kappa-B signaling. This chain is TRAF-interacting protein with FHA domain-containing protein A, found in Rattus norvegicus (Rat).